The sequence spans 520 residues: 1,4-alpha-glucan branching enzyme TTHA1902 (520 aa).

Glutamate 184 (nucleophile) is an active-site residue. Positions 265 and 282 each coordinate substrate. Aspartate 353 (proton donor) is an active-site residue. Residues tryptophan 404, aspartate 460, and glutamine 469 each coordinate substrate.

It belongs to the glycosyl hydrolase 57 family.

The enzyme catalyses Transfers a segment of a (1-&gt;4)-alpha-D-glucan chain to a primary hydroxy group in a similar glucan chain.. Its pathway is glycan biosynthesis; glycogen biosynthesis. Functionally, catalyzes the formation of branch points in alpha-glucans by cleavage of an alpha-1,4 glycosidic bond and subsequent transfer of the cleaved-off oligosaccharide to a new alpha-1,6 position. The branch chain-length distribution of the reaction products shows degree of polymerization (DP) of 3 to 13, with two local maxima at DP 7 and DP 11. Exhibits an alpha-retaining catalytic mechanism. Is involved in glycogen biosynthesis. Shows a secondary activity, i.e. the hydrolysis of the substrate, being 4% of the total activity. Can use amylose as substrate but not alpha-1,4-linked oligosaccharides of 2-7 glucose residues, beta-cyclodextrin, 6-O-glucosyl-beta-cyclodextrin and 6-O-maltosyl-beta-cyclodextrin. Is not able to branch amylopectin further, it only hydrolyzes amylopectin. Thus, displays preference for linear and long substrates (amylose) over branched structures (amylopectin). In Thermus thermophilus (strain ATCC 27634 / DSM 579 / HB8), this protein is 1,4-alpha-glucan branching enzyme TTHA1902.